The primary structure comprises 285 residues: 4-diphosphocytidyl-2-C-methyl-D-erythritol kinase (285 aa).

Lysine 9 is a catalytic residue. 89 to 99 (PLGAGLGGGSS) contributes to the ATP binding site. Aspartate 131 is a catalytic residue.

It belongs to the GHMP kinase family. IspE subfamily.

The enzyme catalyses 4-CDP-2-C-methyl-D-erythritol + ATP = 4-CDP-2-C-methyl-D-erythritol 2-phosphate + ADP + H(+). The protein operates within isoprenoid biosynthesis; isopentenyl diphosphate biosynthesis via DXP pathway; isopentenyl diphosphate from 1-deoxy-D-xylulose 5-phosphate: step 3/6. Catalyzes the phosphorylation of the position 2 hydroxy group of 4-diphosphocytidyl-2C-methyl-D-erythritol. This chain is 4-diphosphocytidyl-2-C-methyl-D-erythritol kinase, found in Thermodesulfovibrio yellowstonii (strain ATCC 51303 / DSM 11347 / YP87).